The chain runs to 63 residues: Cecropin-B (63 aa).

The N-terminal stretch at 1–22 (MNFNKIFVFVALILAISLGNTE) is a signal peptide. Arg-62 bears the Arginine amide mark.

Belongs to the cecropin family.

It is found in the secreted. In terms of biological role, cecropins have lytic and antibacterial activity against several Gram-positive and Gram-negative bacteria. In Drosophila simulans (Fruit fly), this protein is Cecropin-B (CecB).